A 20-amino-acid chain; its full sequence is Beta-fibrinogenase jerdofibrase (20 aa).

In terms of domain architecture, Peptidase S1 spans 1–20 (VIGGDECNINEHPFLVLVYY).

It belongs to the peptidase S1 family. Snake venom subfamily. Monomer. In terms of tissue distribution, expressed by the venom gland.

Its subcellular location is the secreted. Inhibited by PMSF and soybean trypsin inhibitor. Partially inhibited by DTT and cysteine. Not affected by EDTA. Its function is as follows. Fibrin(ogen)olytic serine protease degrades Bbeta-chain of human fibrinogen (FGB) and shows a lower activity on Aa-chain (FGA). Also degrades fibrin directly. Releases fibrinopeptide B and a small amount of fibrinopeptide A. Has also be shown to catalyze the hydrolysis of some chromogenic substrates such as S2238, S2160, S2302 and S2251. In Protobothrops jerdonii (Jerdon's pitviper), this protein is Beta-fibrinogenase jerdofibrase.